Reading from the N-terminus, the 80-residue chain is Exodeoxyribonuclease 7 small subunit (80 aa).

This sequence belongs to the XseB family. Heterooligomer composed of large and small subunits.

It localises to the cytoplasm. It carries out the reaction Exonucleolytic cleavage in either 5'- to 3'- or 3'- to 5'-direction to yield nucleoside 5'-phosphates.. Bidirectionally degrades single-stranded DNA into large acid-insoluble oligonucleotides, which are then degraded further into small acid-soluble oligonucleotides. The chain is Exodeoxyribonuclease 7 small subunit from Vibrio campbellii (strain ATCC BAA-1116).